The sequence spans 204 residues: uncharacterized protein (204 aa).

This is an uncharacterized protein from Acinetobacter calcoaceticus.